The sequence spans 71 residues: MDTLKNAANYVGDKVQGATATASKEANKDVAKDSNQGVGTRLNAAGDAISDKVSENKHDAKAEAHKQGATH.

Residues 19-71 form a disordered region; the sequence is TATASKEANKDVAKDSNQGVGTRLNAAGDAISDKVSENKHDAKAEAHKQGATH. Basic and acidic residues predominate over residues 49-71; that stretch reads ISDKVSENKHDAKAEAHKQGATH.

The protein is Glucose-repressible gene protein (grg-1) of Neurospora crassa (strain ATCC 24698 / 74-OR23-1A / CBS 708.71 / DSM 1257 / FGSC 987).